The sequence spans 219 residues: 2-phospho-L-lactate guanylyltransferase (219 aa).

Belongs to the CofC family. Homodimer.

The catalysed reaction is (2S)-2-phospholactate + GTP + H(+) = (2S)-lactyl-2-diphospho-5'-guanosine + diphosphate. It participates in cofactor biosynthesis; coenzyme F420 biosynthesis. Guanylyltransferase that catalyzes the activation of (2S)-2-phospholactate (2-PL) as (2S)-lactyl-2-diphospho-5'-guanosine, via the condensation of 2-PL with GTP. It is involved in the biosynthesis of coenzyme F420, a hydride carrier cofactor. This chain is 2-phospho-L-lactate guanylyltransferase, found in Methanocaldococcus vulcanius (strain ATCC 700851 / DSM 12094 / M7) (Methanococcus vulcanius).